A 304-amino-acid polypeptide reads, in one-letter code: Type II methyltransferase M.HindV (304 aa).

The 299-residue stretch at 1 to 299 (MKCVDLFSGC…SAIINFEKEP (299 aa)) folds into the SAM-dependent MTase C5-type domain. C75 is an active-site residue.

The protein belongs to the class I-like SAM-binding methyltransferase superfamily. C5-methyltransferase family.

It catalyses the reaction a 2'-deoxycytidine in DNA + S-adenosyl-L-methionine = a 5-methyl-2'-deoxycytidine in DNA + S-adenosyl-L-homocysteine + H(+). Functionally, a methylase, recognizes the double-stranded sequence 5'-GRCGYC-3', methylates C-? on both strands, and protects the DNA from cleavage by the HindV endonuclease. In Haemophilus influenzae (strain ATCC 51907 / DSM 11121 / KW20 / Rd), this protein is Type II methyltransferase M.HindV (hindVM).